The sequence spans 250 residues: 1-(5-phosphoribosyl)-5-[(5-phosphoribosylamino)methylideneamino] imidazole-4-carboxamide isomerase (250 aa).

Residue Asp12 is the Proton acceptor of the active site. Catalysis depends on Asp134, which acts as the Proton donor.

This sequence belongs to the HisA/HisF family.

Its subcellular location is the cytoplasm. The enzyme catalyses 1-(5-phospho-beta-D-ribosyl)-5-[(5-phospho-beta-D-ribosylamino)methylideneamino]imidazole-4-carboxamide = 5-[(5-phospho-1-deoxy-D-ribulos-1-ylimino)methylamino]-1-(5-phospho-beta-D-ribosyl)imidazole-4-carboxamide. It functions in the pathway amino-acid biosynthesis; L-histidine biosynthesis; L-histidine from 5-phospho-alpha-D-ribose 1-diphosphate: step 4/9. The polypeptide is 1-(5-phosphoribosyl)-5-[(5-phosphoribosylamino)methylideneamino] imidazole-4-carboxamide isomerase (Actinobacillus pleuropneumoniae serotype 7 (strain AP76)).